The chain runs to 222 residues: Countin-3 (222 aa).

The N-terminal stretch at Met1–Ser20 is a signal peptide. The Saposin B-type domain maps to Ser21–Asp105. 3 disulfide bridges follow: Cys25/Cys101, Cys28/Cys95, and Cys56/Cys68. N-linked (GlcNAc...) asparagine glycosylation is found at Asn108, Asn134, and Asn218.

It belongs to the countin family.

The protein resides in the secreted. May control the size of the multicellular structure. The sequence is that of Countin-3 (ctnC) from Dictyostelium discoideum (Social amoeba).